The primary structure comprises 37 residues: Large ribosomal subunit protein bL36 (37 aa).

Belongs to the bacterial ribosomal protein bL36 family.

This chain is Large ribosomal subunit protein bL36, found in Chromohalobacter salexigens (strain ATCC BAA-138 / DSM 3043 / CIP 106854 / NCIMB 13768 / 1H11).